We begin with the raw amino-acid sequence, 339 residues long: Nitrilase (339 aa).

Residues 7–277 form the CN hydrolase domain; it reads YRVAAVQASP…EGITYADIDL (271 aa). Catalysis depends on Glu-47, which acts as the Proton acceptor. Residue Lys-128 is the Proton donor of the active site. Cys-162 functions as the Nucleophile in the catalytic mechanism.

The protein belongs to the carbon-nitrogen hydrolase superfamily. Nitrilase family.

It catalyses the reaction a nitrile + 2 H2O = a carboxylate + NH4(+). The chain is Nitrilase (nit) from Bacillus sp. (strain OxB-1).